The chain runs to 311 residues: Olfactory receptor 2Y1 (311 aa).

The Extracellular segment spans residues 1-25 (MGSFNTSFEDGFILVGFSDWPQLEP). N-linked (GlcNAc...) asparagine glycosylation occurs at N5. The chain crosses the membrane as a helical span at residues 26–49 (ILFVFIFIFYSLTLFGNTIIIALS). At 50–57 (WLDLRLHT) the chain is on the cytoplasmic side. Residues 58 to 79 (PMYFFLSHLSLLDLCFTTSTVP) traverse the membrane as a helical segment. The Extracellular segment spans residues 80 to 100 (QLLINLCGVDRTITRGGCVAQ). An intrachain disulfide couples C97 to C188. A helical membrane pass occupies residues 101–120 (LFIYLALGSTECVLLVVMAF). Residues 121–139 (DRYAAVCRPLHYMAIMHPH) are Cytoplasmic-facing. Residues 140-158 (LCQTLAIASWGAGFVNSLI) form a helical membrane-spanning segment. Topologically, residues 159–194 (QTGLAMAMPLCGHRLNHFFCEMPVFLKLACADTEGT) are extracellular. Residues 195-218 (EAKMFVARVIVVAVPAALILGSYV) form a helical membrane-spanning segment. The Cytoplasmic segment spans residues 219-235 (HIAHAVLRVKSTAGRRK). A helical transmembrane segment spans residues 236 to 258 (AFGTCGSHLLVVFLFYGSAIYTY). The Extracellular portion of the chain corresponds to 259-271 (LQSIHNYSEREGK). The N-linked (GlcNAc...) asparagine glycan is linked to N264. A helical transmembrane segment spans residues 272-291 (FVALFYTIITPILNPLIYTL). Topologically, residues 292–311 (RNKDVKGALWKVLWRGRDSG) are cytoplasmic.

It belongs to the G-protein coupled receptor 1 family.

The protein localises to the cell membrane. Odorant receptor. The protein is Olfactory receptor 2Y1 (OR2Y1) of Homo sapiens (Human).